We begin with the raw amino-acid sequence, 80 residues long: U4-theraphotoxin-Spl1a (80 aa).

An N-terminal signal peptide occupies residues methionine 1–alanine 21. Positions glutamate 22–arginine 50 are excised as a propeptide. Disulfide bonds link cysteine 52/cysteine 66, cysteine 59/cysteine 71, and cysteine 65/cysteine 75. At leucine 79 the chain carries Leucine amide.

Belongs to the neurotoxin 30 (phrixotoxin) family. Expressed by the venom gland.

It is found in the secreted. Probable ion channel inhibitor. Shows insecticidal activity when injected into mealworms. This is U4-theraphotoxin-Spl1a from Selenotypus plumipes (Australian featherleg tarantula).